A 1226-amino-acid polypeptide reads, in one-letter code: Methionine synthase (1226 aa).

The region spanning 7–327 (KVQIEKQLSE…EHIRQMALVV (321 aa)) is the Hcy-binding domain. Residues C249, C312, and C313 each coordinate Zn(2+). The Pterin-binding domain maps to 358–619 (FINVGERTNV…VPEDLREAVE (262 aa)). Residues 652 to 746 (SALEWRDWPV…FINASKEVGA (95 aa)) form the B12-binding N-terminal domain. Methylcob(III)alamin contacts are provided by residues E696, 758–762 (GDVHD), H761, S806, T810, and A862. A B12-binding domain is found at 748–883 (NGKILLATVK…SDELKPSFVE (136 aa)). An AdoMet activation domain is found at 899-1226 (KQPRTKPVTL…AEKWLGPNLN (328 aa)). Residues D949, R1137, and 1192-1193 (YF) each bind S-adenosyl-L-methionine.

The protein belongs to the vitamin-B12 dependent methionine synthase family. Requires methylcob(III)alamin as cofactor. The cofactor is Zn(2+).

The catalysed reaction is (6S)-5-methyl-5,6,7,8-tetrahydrofolate + L-homocysteine = (6S)-5,6,7,8-tetrahydrofolate + L-methionine. It participates in amino-acid biosynthesis; L-methionine biosynthesis via de novo pathway; L-methionine from L-homocysteine (MetH route): step 1/1. Functionally, catalyzes the transfer of a methyl group from methyl-cobalamin to homocysteine, yielding enzyme-bound cob(I)alamin and methionine. Subsequently, remethylates the cofactor using methyltetrahydrofolate. The polypeptide is Methionine synthase (metH) (Aliivibrio fischeri (strain ATCC 700601 / ES114) (Vibrio fischeri)).